A 342-amino-acid chain; its full sequence is Isopentenyl-diphosphate delta-isomerase (342 aa).

11-12 is a substrate binding site; it reads RK. FMN-binding positions include S68, 69 to 71, S99, and N127; that span reads SMT. A substrate-binding site is contributed by 99 to 101; that stretch reads SMR. Q162 lines the substrate pocket. E163 contributes to the Mg(2+) binding site. Residues K194, T224, 274-276, and 295-296 each bind FMN; these read GLK and AG.

It belongs to the IPP isomerase type 2 family. As to quaternary structure, homooctamer. Dimer of tetramers. The cofactor is FMN. Requires NADPH as cofactor. Mg(2+) is required as a cofactor.

Its subcellular location is the cytoplasm. It catalyses the reaction isopentenyl diphosphate = dimethylallyl diphosphate. Functionally, involved in the biosynthesis of isoprenoids. Catalyzes the 1,3-allylic rearrangement of the homoallylic substrate isopentenyl (IPP) to its allylic isomer, dimethylallyl diphosphate (DMAPP). In Rickettsia africae (strain ESF-5), this protein is Isopentenyl-diphosphate delta-isomerase.